The chain runs to 128 residues: Cytochrome c-type biogenesis protein CcmE (128 aa).

The Cytoplasmic portion of the chain corresponds to 1–8 (MQKRVRNR). Residues 9–29 (LITIIICFCSAALGISIVLYN) traverse the membrane as a helical; Signal-anchor for type II membrane protein segment. Topologically, residues 30–128 (LEKNIVFFLP…KHDENYRPPS (99 aa)) are periplasmic. His120 and Tyr124 together coordinate heme.

This sequence belongs to the CcmE/CycJ family.

It is found in the cell inner membrane. Functionally, heme chaperone required for the biogenesis of c-type cytochromes. Transiently binds heme delivered by CcmC and transfers the heme to apo-cytochromes in a process facilitated by CcmF and CcmH. This chain is Cytochrome c-type biogenesis protein CcmE, found in Rickettsia felis (strain ATCC VR-1525 / URRWXCal2) (Rickettsia azadi).